Consider the following 301-residue polypeptide: Small ribosomal subunit protein uS3 (301 aa).

A KH type-2 domain is found at 39–107 (VREYLKAKLK…PVAVNIEEVR (69 aa)). Positions 211–301 (GESPGAKLDA…AAAADGTKTE (91 aa)) are disordered. Basic and acidic residues predominate over residues 224–244 (DEERKPRGPRRDARPGSDRPA). A compositionally biased stretch (low complexity) spans 245-257 (PRGARAPRAPAGG).

Belongs to the universal ribosomal protein uS3 family. In terms of assembly, part of the 30S ribosomal subunit. Forms a tight complex with proteins S10 and S14.

Its function is as follows. Binds the lower part of the 30S subunit head. Binds mRNA in the 70S ribosome, positioning it for translation. The chain is Small ribosomal subunit protein uS3 from Polaromonas sp. (strain JS666 / ATCC BAA-500).